We begin with the raw amino-acid sequence, 555 residues long: MSDIEIARAATKKPIQQIGATLGIGADDLLPYGHDKAKVSQSFITSVQDRPNGKLILVTAINPTPAGEGKTTTTVGLGDGLNRIGKKACVCIREASLGPNFGMKGGAAGGGHAQVIPMEDMNLHFTGDFHAITSAHSLLSAMIDNHIYWGNELEIDIRRVTWRRVVDMNDRALRQITASLGGVANGFPREAGFDITVASEVMAILCLARDLKDLEQRLGDMIVAYRRDRSPVYCRDIKAEGAMTVLLKDAMQPNLVQTLENNPAFVHGGPFANIAHGCNSVIATTTALKLADFVVTEAGFGADLGAEKFMNIKCRKAGLAPDCVVLVATVRAMKMNGGVAKADLGAENVAAVQAGCANLGRHIGNLQGFGVPVVVAINHFVTDTEAEIQAVKDYVAGQGAEAILSRHWELGSEGSAALATRVAEIAESGASQFSPLYPDAMPLLEKIETIAKRIYHAEKVIADNKIVDQLKLWEEQGYGHLPICMAKTQYSFSTDPNERGAPTGHAIPVREVRLSAGAGFVVVVCGEIMTMPGLPRVPSAEHIRLNDAGEVEGLF.

64-71 lines the ATP pocket; it reads TPAGEGKT.

The protein belongs to the formate--tetrahydrofolate ligase family.

The enzyme catalyses (6S)-5,6,7,8-tetrahydrofolate + formate + ATP = (6R)-10-formyltetrahydrofolate + ADP + phosphate. It functions in the pathway one-carbon metabolism; tetrahydrofolate interconversion. The protein is Formate--tetrahydrofolate ligase of Dinoroseobacter shibae (strain DSM 16493 / NCIMB 14021 / DFL 12).